Here is an 863-residue protein sequence, read N- to C-terminus: Leucine--tRNA ligase (863 aa).

A 'HIGH' region motif is present at residues 42–52; the sequence is PYPSGRLHMGH. The short motif at 618–622 is the 'KMSKS' region element; that stretch reads KMSKS. ATP is bound at residue Lys621.

Belongs to the class-I aminoacyl-tRNA synthetase family.

It is found in the cytoplasm. It catalyses the reaction tRNA(Leu) + L-leucine + ATP = L-leucyl-tRNA(Leu) + AMP + diphosphate. The protein is Leucine--tRNA ligase of Colwellia psychrerythraea (strain 34H / ATCC BAA-681) (Vibrio psychroerythus).